A 334-amino-acid polypeptide reads, in one-letter code: Ketol-acid reductoisomerase (NADP(+)) (334 aa).

The KARI N-terminal Rossmann domain occupies 1–181 (MTTVYYDQDV…GATRAGVIET (181 aa)). Residues 25 to 28 (YGSQ), Arg48, Ser52, and 82 to 85 (DEIQ) each bind NADP(+). His107 is an active-site residue. An NADP(+)-binding site is contributed by Gly133. In terms of domain architecture, KARI C-terminal knotted spans 182 to 327 (TFKEETETDL…RELREMMPFI (146 aa)). Residues Asp190, Glu194, Glu226, and Glu230 each coordinate Mg(2+). Ser251 is a substrate binding site.

This sequence belongs to the ketol-acid reductoisomerase family. Mg(2+) is required as a cofactor.

It catalyses the reaction (2R)-2,3-dihydroxy-3-methylbutanoate + NADP(+) = (2S)-2-acetolactate + NADPH + H(+). The enzyme catalyses (2R,3R)-2,3-dihydroxy-3-methylpentanoate + NADP(+) = (S)-2-ethyl-2-hydroxy-3-oxobutanoate + NADPH + H(+). The protein operates within amino-acid biosynthesis; L-isoleucine biosynthesis; L-isoleucine from 2-oxobutanoate: step 2/4. It functions in the pathway amino-acid biosynthesis; L-valine biosynthesis; L-valine from pyruvate: step 2/4. Its function is as follows. Involved in the biosynthesis of branched-chain amino acids (BCAA). Catalyzes an alkyl-migration followed by a ketol-acid reduction of (S)-2-acetolactate (S2AL) to yield (R)-2,3-dihydroxy-isovalerate. In the isomerase reaction, S2AL is rearranged via a Mg-dependent methyl migration to produce 3-hydroxy-3-methyl-2-ketobutyrate (HMKB). In the reductase reaction, this 2-ketoacid undergoes a metal-dependent reduction by NADPH to yield (R)-2,3-dihydroxy-isovalerate. The chain is Ketol-acid reductoisomerase (NADP(+)) from Staphylococcus aureus (strain MSSA476).